The chain runs to 85 residues: UPF0386 protein TM1040_0419 (85 aa).

The disordered stretch occupies residues 62–85 (SKSSRPYQISEKGRRSVRAQLDNR).

This sequence belongs to the UPF0386 family.

The sequence is that of UPF0386 protein TM1040_0419 from Ruegeria sp. (strain TM1040) (Silicibacter sp.).